The primary structure comprises 258 residues: Uridylate cyclase (258 aa).

The region spanning 50–190 is the Guanylate cyclase domain; that stretch reads AAIFIDLRGS…DVVNKASKMC (141 aa). An a ribonucleoside 5'-triphosphate-binding site is contributed by F53. The Mn(2+) site is built by D55 and D102.

It belongs to the adenylyl cyclase class-4/guanylyl cyclase family. Pyrimidine cyclase subfamily. In terms of assembly, homodimer. The cofactor is Mn(2+).

It is found in the cytoplasm. The enzyme catalyses UTP = 3',5'-cyclic UMP + diphosphate. In terms of biological role, pycsar (pyrimidine cyclase system for antiphage resistance) provides immunity against bacteriophage. The pyrimidine cyclase (PycC) synthesizes cyclic nucleotides in response to infection; these serve as specific second messenger signals. The signals activate the adjacent effector, leading to bacterial cell death and abortive phage infection. A clade C Pycsar system. Functionally, the pyrimidine cyclase gene of a two-gene Pycsar system, weakly generates cyclic UMP (cUMP) from UTP, has little to no activity on ATP, CTP or GTP. Expression of this and adjacent effector GmPycTM (AC P0DV43) probably confers resistance to bacteriophage. The genes are probably only expressed in response to bacteriophage infection. This chain is Uridylate cyclase, found in Gulbenkiania mobilis.